Consider the following 225-residue polypeptide: Enolase-phosphatase E1 (225 aa).

The protein belongs to the HAD-like hydrolase superfamily. MasA/MtnC family. In terms of assembly, monomer. Mg(2+) is required as a cofactor.

It catalyses the reaction 5-methylsulfanyl-2,3-dioxopentyl phosphate + H2O = 1,2-dihydroxy-5-(methylsulfanyl)pent-1-en-3-one + phosphate. Its pathway is amino-acid biosynthesis; L-methionine biosynthesis via salvage pathway; L-methionine from S-methyl-5-thio-alpha-D-ribose 1-phosphate: step 3/6. The protein operates within amino-acid biosynthesis; L-methionine biosynthesis via salvage pathway; L-methionine from S-methyl-5-thio-alpha-D-ribose 1-phosphate: step 4/6. Functionally, bifunctional enzyme that catalyzes the enolization of 2,3-diketo-5-methylthiopentyl-1-phosphate (DK-MTP-1-P) into the intermediate 2-hydroxy-3-keto-5-methylthiopentenyl-1-phosphate (HK-MTPenyl-1-P), which is then dephosphorylated to form the acireductone 1,2-dihydroxy-3-keto-5-methylthiopentene (DHK-MTPene). This chain is Enolase-phosphatase E1, found in Shewanella piezotolerans (strain WP3 / JCM 13877).